The primary structure comprises 459 residues: E3 ubiquitin-protein ligase RNF14 (459 aa).

In terms of domain architecture, RWD spans 10–129; sequence DELLALASIY…QFLKEETLDF (120 aa). Positions 141–169 are disordered; the sequence is SGSQPQCEPAQKHAADASGEKSKVQDLDP. Positions 150–169 are enriched in basic and acidic residues; that stretch reads AQKHAADASGEKSKVQDLDP. The TRIAD supradomain stretch occupies residues 200–441; sequence KAFCCGICYS…NPDSPCYNQL (242 aa). 18 residues coordinate Zn(2+): cysteine 204, cysteine 207, cysteine 222, histidine 224, cysteine 227, cysteine 230, cysteine 249, cysteine 254, cysteine 293, cysteine 298, cysteine 313, cysteine 316, cysteine 321, cysteine 324, histidine 329, cysteine 334, cysteine 388, and cysteine 391. RING-type zinc fingers lie at residues 204–249 and 204–254; these read CGIC…CLNC and CGIC…EPKC. Residues 273–334 form an IBR-type zinc finger; sequence ARYDRLLLQS…RRSYHGLSHC (62 aa). An RING-type 2; atypical zinc finger spans residues 388 to 417; the sequence is CPCCGTNIQKAHGCNKMTCSSCQKYFCWIC. The active site involves cysteine 401. Positions 406, 409, 414, 417, 429, and 437 each coordinate Zn(2+).

It belongs to the RBR family. RNF14 subfamily.

It localises to the cytoplasm. The protein resides in the nucleus. The catalysed reaction is [E2 ubiquitin-conjugating enzyme]-S-ubiquitinyl-L-cysteine + [acceptor protein]-L-lysine = [E2 ubiquitin-conjugating enzyme]-L-cysteine + [acceptor protein]-N(6)-ubiquitinyl-L-lysine.. It participates in protein modification; protein ubiquitination. E3 ubiquitin-protein ligase that plays a key role in the RNF14-RNF25 translation quality control pathway, a pathway that takes place when a ribosome has stalled during translation, and which promotes ubiquitination and degradation of translation factors on stalled ribosomes. Recruited to stalled ribosomes by the ribosome collision sensor GCN1 and mediates 'Lys-6'-linked ubiquitination of target proteins, leading to their degradation. Mediates ubiquitination of eef1a1/eEF1A and etf1/eRF1 translation factors on stalled ribosomes, leading to their degradation. Specifically required to resolve RNA-protein cross-links caused by reactive aldehydes, which trigger translation stress by stalling ribosomes: acts by catalying 'Lys-6'-linked ubiquitination of RNA-protein cross-links, leading to their removal by the ATP-dependent unfoldase VCP and subsequent degradation by the proteasome. Independently of its function in the response to stalled ribosomes, acts as a regulator of transcription in Wnt signaling via its interaction with TCF transcription factors (tcf7/tcf1, tcf7l1/tcf3 and tcf7l2/tcf4). This Danio rerio (Zebrafish) protein is E3 ubiquitin-protein ligase RNF14.